Consider the following 475-residue polypeptide: Ribulose bisphosphate carboxylase large chain (475 aa).

Lysine 14 carries the N6,N6,N6-trimethyllysine modification. Substrate is bound by residues asparagine 123 and threonine 173. Lysine 175 (proton acceptor) is an active-site residue. A substrate-binding site is contributed by lysine 177. The Mg(2+) site is built by lysine 201, aspartate 203, and glutamate 204. Lysine 201 carries the N6-carboxylysine modification. The active-site Proton acceptor is the histidine 294. Substrate is bound by residues arginine 295, histidine 327, and serine 379.

It belongs to the RuBisCO large chain family. Type I subfamily. Heterohexadecamer of 8 large chains and 8 small chains; disulfide-linked. The disulfide link is formed within the large subunit homodimers. It depends on Mg(2+) as a cofactor. The disulfide bond which can form in the large chain dimeric partners within the hexadecamer appears to be associated with oxidative stress and protein turnover.

It is found in the plastid. The protein localises to the chloroplast. It catalyses the reaction 2 (2R)-3-phosphoglycerate + 2 H(+) = D-ribulose 1,5-bisphosphate + CO2 + H2O. The enzyme catalyses D-ribulose 1,5-bisphosphate + O2 = 2-phosphoglycolate + (2R)-3-phosphoglycerate + 2 H(+). RuBisCO catalyzes two reactions: the carboxylation of D-ribulose 1,5-bisphosphate, the primary event in carbon dioxide fixation, as well as the oxidative fragmentation of the pentose substrate in the photorespiration process. Both reactions occur simultaneously and in competition at the same active site. This chain is Ribulose bisphosphate carboxylase large chain, found in Actinidia chinensis (Kiwi).